The following is a 609-amino-acid chain: Glutamine--fructose-6-phosphate aminotransferase [isomerizing] (609 aa).

Cys-2 (nucleophile; for GATase activity) is an active-site residue. The Glutamine amidotransferase type-2 domain occupies 2-218 (CGIVGAIAQR…EGDIAEITRR (217 aa)). 2 SIS domains span residues 286-426 (ADEL…LKGL) and 458-599 (LAED…VDQP). Catalysis depends on Lys-604, which acts as the For Fru-6P isomerization activity.

As to quaternary structure, homodimer. In pull-down experiments interacts with CedA.

The protein resides in the cytoplasm. It carries out the reaction D-fructose 6-phosphate + L-glutamine = D-glucosamine 6-phosphate + L-glutamate. Catalyzes the first step in hexosamine metabolism, converting fructose-6P into glucosamine-6P using glutamine as a nitrogen source. The protein is Glutamine--fructose-6-phosphate aminotransferase [isomerizing] (glmS) of Escherichia coli (strain K12).